Consider the following 107-residue polypeptide: uncharacterized protein (107 aa).

This is an uncharacterized protein from Bacillus subtilis (strain 168).